The sequence spans 145 residues: Large-conductance mechanosensitive channel (145 aa).

Helical transmembrane passes span Val16–Phe36 and Gly83–Ile103.

Belongs to the MscL family. In terms of assembly, homopentamer.

It localises to the cell inner membrane. Functionally, channel that opens in response to stretch forces in the membrane lipid bilayer. May participate in the regulation of osmotic pressure changes within the cell. This is Large-conductance mechanosensitive channel from Geobacter metallireducens (strain ATCC 53774 / DSM 7210 / GS-15).